The primary structure comprises 325 residues: ATP-dependent 6-phosphofructokinase (325 aa).

G12 is an ATP binding site. Residue 22–26 (RTIVK) coordinates ADP. ATP contacts are provided by residues 73–74 (RY) and 103–106 (GDGS). Residue D104 participates in Mg(2+) binding. Residue 126 to 128 (TID) participates in substrate binding. The active-site Proton acceptor is D128. Residue R155 coordinates ADP. 170 to 172 (MGH) provides a ligand contact to substrate. Residues 186–188 (GAE), K213, and 215–217 (KRS) contribute to the ADP site. Residues E224, R246, and 252-255 (HTQR) each bind substrate.

Belongs to the phosphofructokinase type A (PFKA) family. ATP-dependent PFK group I subfamily. Prokaryotic clade 'B1' sub-subfamily. In terms of assembly, homotetramer. Mg(2+) is required as a cofactor.

It localises to the cytoplasm. It carries out the reaction beta-D-fructose 6-phosphate + ATP = beta-D-fructose 1,6-bisphosphate + ADP + H(+). It participates in carbohydrate degradation; glycolysis; D-glyceraldehyde 3-phosphate and glycerone phosphate from D-glucose: step 3/4. Its activity is regulated as follows. Allosterically activated by ADP and other diphosphonucleosides, and allosterically inhibited by phosphoenolpyruvate. In terms of biological role, catalyzes the phosphorylation of D-fructose 6-phosphate to fructose 1,6-bisphosphate by ATP, the first committing step of glycolysis. The chain is ATP-dependent 6-phosphofructokinase from Mycoplasma mobile (strain ATCC 43663 / 163K / NCTC 11711) (Mesomycoplasma mobile).